The following is a 250-amino-acid chain: Probable transcriptional regulatory protein RER_29220 (250 aa).

It belongs to the TACO1 family.

It is found in the cytoplasm. This chain is Probable transcriptional regulatory protein RER_29220, found in Rhodococcus erythropolis (strain PR4 / NBRC 100887).